A 567-amino-acid chain; its full sequence is Vacuolar fusion protein MON1 homolog (567 aa).

Disordered stretches follow at residues methionine 1–glycine 52 and threonine 65–serine 129. Over residues threonine 7–proline 19 the composition is skewed to pro residues. A compositionally biased stretch (acidic residues) spans aspartate 43–glycine 52.

This sequence belongs to the MON1/SAND family. As to quaternary structure, interacts with CCZ1A, CCZ1B and RABF2B.

It localises to the endosome. Its subcellular location is the prevacuolar compartment. Its function is as follows. Plays an important role in membrane trafficking through the secretory apparatus. In complex with CCZ1, acts as a guanine exchange factor (GEF) for Rab7 protein family. Promotes the exchange of GDP to GTP, converting it from an inactive GDP-bound form into an active GTP-bound form. The active form is involved in protein trafficking from prevacuolar compartments (PVCs) to vacuoles. May serve as a linker between Rab5 and Rab7 protein families in PVCs and mediate PVC maturation. This is Vacuolar fusion protein MON1 homolog from Oryza sativa subsp. japonica (Rice).